The sequence spans 397 residues: Putative efflux system protein YvrP (397 aa).

A helical membrane pass occupies residues 8-28 (LIGGAICAGVLVLAGIGAGGF). Positions 106–183 (EDHSDEVEQA…KELAGLTKNK (78 aa)) form a coiled coil.

The protein belongs to the membrane fusion protein (MFP) (TC 8.A.1) family.

It localises to the cell membrane. The chain is Putative efflux system protein YvrP (yvrP) from Bacillus subtilis (strain 168).